A 492-amino-acid polypeptide reads, in one-letter code: ATP synthase subunit beta, chloroplastic (492 aa).

Position 170–177 (170–177 (GGAGVGKT)) interacts with ATP.

It belongs to the ATPase alpha/beta chains family. In terms of assembly, F-type ATPases have 2 components, CF(1) - the catalytic core - and CF(0) - the membrane proton channel. CF(1) has five subunits: alpha(3), beta(3), gamma(1), delta(1), epsilon(1). CF(0) has four main subunits: a(1), b(1), b'(1) and c(9-12).

Its subcellular location is the plastid. The protein localises to the chloroplast thylakoid membrane. The catalysed reaction is ATP + H2O + 4 H(+)(in) = ADP + phosphate + 5 H(+)(out). Functionally, produces ATP from ADP in the presence of a proton gradient across the membrane. The catalytic sites are hosted primarily by the beta subunits. The sequence is that of ATP synthase subunit beta, chloroplastic from Angiopteris evecta (Mule's foot fern).